A 469-amino-acid polypeptide reads, in one-letter code: GTPase Der (469 aa).

EngA-type G domains lie at 3 to 166 (PVIA…PEDE) and 177 to 350 (LRLA…ESAN). GTP contacts are provided by residues 9-16 (GRPNVGKS), 56-60 (DTGGI), 118-121 (NKVD), 183-190 (GRPNVGKS), 230-234 (DTAGV), and 295-298 (NKWD). Residues 351 to 435 (LKVSPAKLTQ…PVKIEFKTSE (85 aa)) form the KH-like domain.

It belongs to the TRAFAC class TrmE-Era-EngA-EngB-Septin-like GTPase superfamily. EngA (Der) GTPase family. In terms of assembly, associates with the 50S ribosomal subunit.

Functionally, GTPase that plays an essential role in the late steps of ribosome biogenesis. The sequence is that of GTPase Der from Acinetobacter baumannii (strain ACICU).